A 647-amino-acid polypeptide reads, in one-letter code: Acetyl-coenzyme A synthetase (647 aa).

CoA-binding positions include 190-193, Thr-310, and Asn-334; that span reads RGGK. ATP-binding positions include 386–388, 410–415, Asp-499, and Arg-514; these read GEP and DTWWQT. Ser-522 is a CoA binding site. Residue Arg-525 participates in ATP binding. The Mg(2+) site is built by Val-536, His-538, and Val-541. Residue Arg-583 participates in CoA binding. N6-acetyllysine is present on Lys-608.

The protein belongs to the ATP-dependent AMP-binding enzyme family. The cofactor is Mg(2+). Acetylated. Deacetylation by the SIR2-homolog deacetylase activates the enzyme.

The catalysed reaction is acetate + ATP + CoA = acetyl-CoA + AMP + diphosphate. Functionally, catalyzes the conversion of acetate into acetyl-CoA (AcCoA), an essential intermediate at the junction of anabolic and catabolic pathways. AcsA undergoes a two-step reaction. In the first half reaction, AcsA combines acetate with ATP to form acetyl-adenylate (AcAMP) intermediate. In the second half reaction, it can then transfer the acetyl group from AcAMP to the sulfhydryl group of CoA, forming the product AcCoA. The sequence is that of Acetyl-coenzyme A synthetase from Xanthomonas oryzae pv. oryzae (strain MAFF 311018).